We begin with the raw amino-acid sequence, 536 residues long: REST corepressor 2 (536 aa).

A disordered region spans residues 1–44; it reads MERSGSGVLSRSRAKTVTNGNSQHSEEESSDEEHPNDSMIRVGG. Basic and acidic residues predominate over residues 24-36; it reads HSEEESSDEEHPN. The ELM2 domain maps to 38-123; that stretch reads SMIRVGGDYQ…KSLADLANFT (86 aa). Residues 124-175 form the SANT 1 domain; it reads PFPDEWTVEDKVLFEQAFSFHGKSFHRIQQMLPDKMITSLVKYYYSWKKTRT. Positions 179-264 are disordered; the sequence is VMDRQARKLL…RARRRPPKGM (86 aa). Positions 197-211 are enriched in acidic residues; the sequence is NDEIEEGDPGSDSDF. Residues 249 to 262 are compositionally biased toward basic residues; sequence YRHHPLRARRRPPK. Residues 283–315 are a coiled coil; that stretch reads VTIRQLDTQLVSLKRQVQKIKQTNSVLRNNLGD. Residues 328 to 379 enclose the SANT 2 domain; it reads KINSRWTTEEQLLAVQAVRRYGKDFAAIADVIGNKTVAQVSSFFVSYRRRFN. A disordered region spans residues 389–536; sequence AEQEVQGSSG…GLKVESPQSH (148 aa). Residues 391-406 show a composition bias toward polar residues; the sequence is QEVQGSSGRTVNTELN. Residues 422-449 are compositionally biased toward low complexity; the sequence is SPPHSDSPLPSSEGSASGNHSSAQSSPP. Over residues 450–476 the composition is skewed to pro residues; sequence LTQPPPLLRPAPPSAPPSLLRQPPPLQ.

Belongs to the CoREST family.

The protein resides in the nucleus. Its function is as follows. May act as a component of a corepressor complex that represses transcription. The sequence is that of REST corepressor 2 (rcor2) from Danio rerio (Zebrafish).